A 149-amino-acid chain; its full sequence is Ribonuclease VapC2 (149 aa).

Residues 11 to 149 (IFFDSNILIY…RVDFLEIIEI (139 aa)) enclose the PINc domain. Residues Asp-14 and Asp-116 each contribute to the Mg(2+) site.

It belongs to the PINc/VapC protein family. Mg(2+) is required as a cofactor.

Toxic component of a type II toxin-antitoxin (TA) system. An RNase. Its cognate antitoxin is VapB2. The sequence is that of Ribonuclease VapC2 from Methanocaldococcus jannaschii (strain ATCC 43067 / DSM 2661 / JAL-1 / JCM 10045 / NBRC 100440) (Methanococcus jannaschii).